The primary structure comprises 479 residues: Ribulose bisphosphate carboxylase large chain (479 aa).

Positions 1–2 (MS) are excised as a propeptide. Residues Asn123 and Thr173 each coordinate substrate. The active-site Proton acceptor is Lys175. Residue Lys177 coordinates substrate. Mg(2+) contacts are provided by Lys201, Asp203, and Glu204. N6-carboxylysine is present on Lys201. The residue at position 208 (Ser208) is a Phosphoserine. The active-site Proton acceptor is His294. Positions 295 and 327 each coordinate substrate. Residue Thr330 is modified to Phosphothreonine. Ser379 serves as a coordination point for substrate.

It belongs to the RuBisCO large chain family. Type I subfamily. As to quaternary structure, heterohexadecamer of 8 large chains and 8 small chains; disulfide-linked. The disulfide link is formed within the large subunit homodimers. Requires Mg(2+) as cofactor. In terms of processing, the disulfide bond which can form in the large chain dimeric partners within the hexadecamer appears to be associated with oxidative stress and protein turnover.

Its subcellular location is the plastid. It is found in the chloroplast. It carries out the reaction 2 (2R)-3-phosphoglycerate + 2 H(+) = D-ribulose 1,5-bisphosphate + CO2 + H2O. The enzyme catalyses D-ribulose 1,5-bisphosphate + O2 = 2-phosphoglycolate + (2R)-3-phosphoglycerate + 2 H(+). In terms of biological role, ruBisCO catalyzes two reactions: the carboxylation of D-ribulose 1,5-bisphosphate, the primary event in carbon dioxide fixation, as well as the oxidative fragmentation of the pentose substrate in the photorespiration process. Both reactions occur simultaneously and in competition at the same active site. The chain is Ribulose bisphosphate carboxylase large chain from Nasturtium officinale (Watercress).